The following is a 40-amino-acid chain: Photosystem II reaction center protein J (40 aa).

A helical transmembrane segment spans residues 8-28; the sequence is IPLWLIGTVTGIIVIGLLGVF.

It belongs to the PsbJ family. As to quaternary structure, PSII is composed of 1 copy each of membrane proteins PsbA, PsbB, PsbC, PsbD, PsbE, PsbF, PsbH, PsbI, PsbJ, PsbK, PsbL, PsbM, PsbT, PsbX, PsbY, PsbZ, Psb30/Ycf12, at least 3 peripheral proteins of the oxygen-evolving complex and a large number of cofactors. It forms dimeric complexes.

The protein localises to the plastid. The protein resides in the chloroplast thylakoid membrane. One of the components of the core complex of photosystem II (PSII). PSII is a light-driven water:plastoquinone oxidoreductase that uses light energy to abstract electrons from H(2)O, generating O(2) and a proton gradient subsequently used for ATP formation. It consists of a core antenna complex that captures photons, and an electron transfer chain that converts photonic excitation into a charge separation. The sequence is that of Photosystem II reaction center protein J from Pinus thunbergii (Japanese black pine).